The sequence spans 179 residues: Ribosome-recycling factor (179 aa).

Belongs to the RRF family.

It is found in the cytoplasm. Responsible for the release of ribosomes from messenger RNA at the termination of protein biosynthesis. May increase the efficiency of translation by recycling ribosomes from one round of translation to another. The chain is Ribosome-recycling factor from Chlamydia trachomatis serovar A (strain ATCC VR-571B / DSM 19440 / HAR-13).